A 129-amino-acid polypeptide reads, in one-letter code: Iron-sulfur cluster assembly 1 homolog, mitochondrial (129 aa).

A mitochondrion-targeting transit peptide spans 1 to 12 (MSASLVRATVRA). 3 residues coordinate Fe cation: Cys-57, Cys-121, and Cys-123.

The protein belongs to the HesB/IscA family. Interacts with CRY2, but not with CRY1 (in vitro).

Its subcellular location is the mitochondrion. Involved in the maturation of mitochondrial 4Fe-4S proteins functioning late in the iron-sulfur cluster assembly pathway. Probably involved in the binding of an intermediate of Fe/S cluster assembly. This chain is Iron-sulfur cluster assembly 1 homolog, mitochondrial (ISCA1), found in Bos taurus (Bovine).